Reading from the N-terminus, the 388-residue chain is Lamin tail domain-containing protein 1 (388 aa).

In terms of domain architecture, LTD spans Glu136–His254. The interval Glu349–Gln388 is disordered. Over residues Arg365–Lys381 the composition is skewed to basic residues.

This sequence belongs to the intermediate filament family.

The protein is Lamin tail domain-containing protein 1 (LMNTD1) of Homo sapiens (Human).